The sequence spans 211 residues: uncharacterized protein (211 aa).

This is an uncharacterized protein from Dictyostelium discoideum (Social amoeba).